The sequence spans 250 residues: GTP cyclohydrolase 1 type 2 homolog (250 aa).

5 residues coordinate a divalent metal cation: H63, H64, D100, H218, and E222.

It belongs to the GTP cyclohydrolase I type 2/NIF3 family. In terms of assembly, homohexamer.

This chain is GTP cyclohydrolase 1 type 2 homolog, found in Pyrococcus abyssi (strain GE5 / Orsay).